Reading from the N-terminus, the 387-residue chain is Lipid-A-disaccharide synthase (387 aa).

The protein belongs to the LpxB family.

The enzyme catalyses a lipid X + a UDP-2-N,3-O-bis[(3R)-3-hydroxyacyl]-alpha-D-glucosamine = a lipid A disaccharide + UDP + H(+). The protein operates within bacterial outer membrane biogenesis; LPS lipid A biosynthesis. Its function is as follows. Condensation of UDP-2,3-diacylglucosamine and 2,3-diacylglucosamine-1-phosphate to form lipid A disaccharide, a precursor of lipid A, a phosphorylated glycolipid that anchors the lipopolysaccharide to the outer membrane of the cell. The chain is Lipid-A-disaccharide synthase from Nitrosococcus oceani (strain ATCC 19707 / BCRC 17464 / JCM 30415 / NCIMB 11848 / C-107).